The sequence spans 252 residues: Type III pantothenate kinase (252 aa).

6–13 (DVGNTHTT) is an ATP binding site. 104 to 107 (GADR) provides a ligand contact to substrate. Residue Asp106 is the Proton acceptor of the active site. Residue Asp126 coordinates K(+). ATP is bound at residue Thr129. Position 180 (Thr180) interacts with substrate.

It belongs to the type III pantothenate kinase family. As to quaternary structure, homodimer. NH4(+) is required as a cofactor. The cofactor is K(+).

It localises to the cytoplasm. The catalysed reaction is (R)-pantothenate + ATP = (R)-4'-phosphopantothenate + ADP + H(+). It functions in the pathway cofactor biosynthesis; coenzyme A biosynthesis; CoA from (R)-pantothenate: step 1/5. Catalyzes the phosphorylation of pantothenate (Pan), the first step in CoA biosynthesis. This is Type III pantothenate kinase from Fervidobacterium nodosum (strain ATCC 35602 / DSM 5306 / Rt17-B1).